A 62-amino-acid polypeptide reads, in one-letter code: Cecropin-A (62 aa).

The signal sequence occupies residues 1 to 20 (MNLVKILFCVFACLVFTVTA). Positions 21-24 (VPEP) are cleaved as a propeptide — removed by a dipeptidylpeptidase. A Threonine amide modification is found at threonine 60.

Belongs to the cecropin family.

Its subcellular location is the secreted. Functionally, has antibacterial activity. The protein is Cecropin-A of Trichoplusia ni (Cabbage looper).